The chain runs to 146 residues: Large-conductance mechanosensitive channel (146 aa).

2 helical membrane passes run 14–34 (VLDL…VNSL) and 81–101 (GLFL…FLLV).

It belongs to the MscL family. In terms of assembly, homopentamer.

Its subcellular location is the cell membrane. Functionally, channel that opens in response to stretch forces in the membrane lipid bilayer. May participate in the regulation of osmotic pressure changes within the cell. The sequence is that of Large-conductance mechanosensitive channel from Symbiobacterium thermophilum (strain DSM 24528 / JCM 14929 / IAM 14863 / T).